Consider the following 199-residue polypeptide: GTP cyclohydrolase-2 (199 aa).

GTP is bound at residue 49-53; the sequence is RIHSE. 3 residues coordinate Zn(2+): Cys54, Cys65, and Cys67. GTP is bound by residues Gln70, 92–94, and Thr114; that span reads EGR. Asp126 functions as the Proton acceptor in the catalytic mechanism. Residue Arg128 is the Nucleophile of the active site. Residues Thr149 and Lys154 each coordinate GTP. The segment at 172-199 is disordered; that stretch reads ETGRNPHNSHYLETKRGKLGHLLEGDSE.

The protein belongs to the GTP cyclohydrolase II family. Zn(2+) serves as cofactor.

It catalyses the reaction GTP + 4 H2O = 2,5-diamino-6-hydroxy-4-(5-phosphoribosylamino)-pyrimidine + formate + 2 phosphate + 3 H(+). It participates in cofactor biosynthesis; riboflavin biosynthesis; 5-amino-6-(D-ribitylamino)uracil from GTP: step 1/4. Functionally, catalyzes the conversion of GTP to 2,5-diamino-6-ribosylamino-4(3H)-pyrimidinone 5'-phosphate (DARP), formate and pyrophosphate. This chain is GTP cyclohydrolase-2, found in Teredinibacter turnerae (strain ATCC 39867 / T7901).